Reading from the N-terminus, the 301-residue chain is Acetyl-coenzyme A carboxylase carboxyl transferase subunit beta (301 aa).

The CoA carboxyltransferase N-terminal domain occupies 25–294 (LWIKCPETGE…SAANDMNSGA (270 aa)).

The protein belongs to the AccD/PCCB family. In terms of assembly, acetyl-CoA carboxylase is a heterohexamer composed of biotin carboxyl carrier protein (AccB), biotin carboxylase (AccC) and two subunits each of ACCase subunit alpha (AccA) and ACCase subunit beta (AccD).

It localises to the cytoplasm. The enzyme catalyses N(6)-carboxybiotinyl-L-lysyl-[protein] + acetyl-CoA = N(6)-biotinyl-L-lysyl-[protein] + malonyl-CoA. It functions in the pathway lipid metabolism; malonyl-CoA biosynthesis; malonyl-CoA from acetyl-CoA: step 1/1. Functionally, component of the acetyl coenzyme A carboxylase (ACC) complex. Biotin carboxylase (BC) catalyzes the carboxylation of biotin on its carrier protein (BCCP) and then the CO(2) group is transferred by the transcarboxylase to acetyl-CoA to form malonyl-CoA. In Rhizobium leguminosarum bv. trifolii (strain WSM1325), this protein is Acetyl-coenzyme A carboxylase carboxyl transferase subunit beta.